A 144-amino-acid chain; its full sequence is Large ribosomal subunit protein uL13 (144 aa).

The protein belongs to the universal ribosomal protein uL13 family. In terms of assembly, part of the 50S ribosomal subunit.

This protein is one of the early assembly proteins of the 50S ribosomal subunit, although it is not seen to bind rRNA by itself. It is important during the early stages of 50S assembly. The protein is Large ribosomal subunit protein uL13 of Syntrophomonas wolfei subsp. wolfei (strain DSM 2245B / Goettingen).